The chain runs to 204 residues: Thymidine kinase (204 aa).

Residues 23 to 30 and 95 to 98 contribute to the ATP site; these read GSMFSGKT and DEAQ. The active-site Proton acceptor is the Glu-96. Zn(2+) is bound by residues Cys-152, Cys-155, Cys-184, and Cys-187.

This sequence belongs to the thymidine kinase family. In terms of assembly, homotetramer.

Its subcellular location is the cytoplasm. It catalyses the reaction thymidine + ATP = dTMP + ADP + H(+). This chain is Thymidine kinase, found in Porphyromonas gingivalis (strain ATCC 33277 / DSM 20709 / CIP 103683 / JCM 12257 / NCTC 11834 / 2561).